Reading from the N-terminus, the 226-residue chain is Uridylate kinase (226 aa).

Position 6 to 10 (6 to 10 (KISGK)) interacts with ATP. G43 contributes to the UMP binding site. G44 and R48 together coordinate ATP. Residues D65 and 113–119 (FQPGQST) contribute to the UMP site. 4 residues coordinate ATP: T139, N140, Y145, and D148.

It belongs to the UMP kinase family. Homohexamer.

Its subcellular location is the cytoplasm. It catalyses the reaction UMP + ATP = UDP + ADP. Its pathway is pyrimidine metabolism; CTP biosynthesis via de novo pathway; UDP from UMP (UMPK route): step 1/1. With respect to regulation, inhibited by UTP. Its function is as follows. Catalyzes the reversible phosphorylation of UMP to UDP. This Saccharolobus islandicus (strain M.16.27) (Sulfolobus islandicus) protein is Uridylate kinase.